The following is a 175-amino-acid chain: Large ribosomal subunit protein uL10 (175 aa).

Belongs to the universal ribosomal protein uL10 family. In terms of assembly, part of the ribosomal stalk of the 50S ribosomal subunit. The N-terminus interacts with L11 and the large rRNA to form the base of the stalk. The C-terminus forms an elongated spine to which L12 dimers bind in a sequential fashion forming a multimeric L10(L12)X complex.

Its function is as follows. Forms part of the ribosomal stalk, playing a central role in the interaction of the ribosome with GTP-bound translation factors. This Prochlorococcus marinus (strain MIT 9301) protein is Large ribosomal subunit protein uL10.